Consider the following 138-residue polypeptide: Large ribosomal subunit protein uL16 (138 aa).

A compositionally biased stretch (basic residues) spans M1 to N16. The interval M1–N25 is disordered.

It belongs to the universal ribosomal protein uL16 family. As to quaternary structure, part of the 50S ribosomal subunit.

Binds 23S rRNA and is also seen to make contacts with the A and possibly P site tRNAs. The sequence is that of Large ribosomal subunit protein uL16 from Corynebacterium urealyticum (strain ATCC 43042 / DSM 7109).